The sequence spans 396 residues: Tryptophan synthase beta chain (396 aa).

The residue at position 88 (K88) is an N6-(pyridoxal phosphate)lysine.

Belongs to the TrpB family. As to quaternary structure, tetramer of two alpha and two beta chains. Requires pyridoxal 5'-phosphate as cofactor.

The enzyme catalyses (1S,2R)-1-C-(indol-3-yl)glycerol 3-phosphate + L-serine = D-glyceraldehyde 3-phosphate + L-tryptophan + H2O. It functions in the pathway amino-acid biosynthesis; L-tryptophan biosynthesis; L-tryptophan from chorismate: step 5/5. Its function is as follows. The beta subunit is responsible for the synthesis of L-tryptophan from indole and L-serine. This Leptospira biflexa serovar Patoc (strain Patoc 1 / Ames) protein is Tryptophan synthase beta chain.